Consider the following 358-residue polypeptide: Peroxidase 12 (358 aa).

The N-terminal stretch at 1 to 31 (MTKAYSTRVLTFLILISLMAVTLNLFPTVEA) is a signal peptide. Intrachain disulfides connect Cys53–Cys134, Cys86–Cys91, Cys140–Cys335, and Cys220–Cys247. Catalysis depends on His84, which acts as the Proton acceptor. 5 residues coordinate Ca(2+): Asp85, Val88, Gly90, Glu92, and Ser94. Pro183 is a substrate binding site. N-linked (GlcNAc...) asparagine glycans are attached at residues Asn188 and Asn202. His213 is a binding site for heme b. Thr214 contributes to the Ca(2+) binding site. A glycan (N-linked (GlcNAc...) asparagine) is linked at Asn251. Ca(2+) contacts are provided by Asp259, Ser262, and Asp267. A glycan (N-linked (GlcNAc...) asparagine) is linked at Asn334.

It belongs to the peroxidase family. Classical plant (class III) peroxidase subfamily. Heme b is required as a cofactor. The cofactor is Ca(2+). Expressed in roots and leaves.

Its subcellular location is the secreted. The protein localises to the vacuole. It catalyses the reaction 2 a phenolic donor + H2O2 = 2 a phenolic radical donor + 2 H2O. Removal of H(2)O(2), oxidation of toxic reductants, biosynthesis and degradation of lignin, suberization, auxin catabolism, response to environmental stresses such as wounding, pathogen attack and oxidative stress. These functions might be dependent on each isozyme/isoform in each plant tissue. In terms of biological role, exhibits a Ca(2+)-pectate binding affinity which could be interpreted in vivo as a specificity to interact with the pectic structure of the cell wall. In Arabidopsis thaliana (Mouse-ear cress), this protein is Peroxidase 12 (PER12).